Reading from the N-terminus, the 635-residue chain is 1-deoxy-D-xylulose-5-phosphate synthase (635 aa).

Residues His78 and 119–121 (GHA) contribute to the thiamine diphosphate site. A Mg(2+)-binding site is contributed by Asp150. Residues 151–152 (GS), Asn179, Phe291, and Glu376 each bind thiamine diphosphate. A Mg(2+)-binding site is contributed by Asn179.

Belongs to the transketolase family. DXPS subfamily. Homodimer. Requires Mg(2+) as cofactor. Thiamine diphosphate serves as cofactor.

The catalysed reaction is D-glyceraldehyde 3-phosphate + pyruvate + H(+) = 1-deoxy-D-xylulose 5-phosphate + CO2. It participates in metabolic intermediate biosynthesis; 1-deoxy-D-xylulose 5-phosphate biosynthesis; 1-deoxy-D-xylulose 5-phosphate from D-glyceraldehyde 3-phosphate and pyruvate: step 1/1. Catalyzes the acyloin condensation reaction between C atoms 2 and 3 of pyruvate and glyceraldehyde 3-phosphate to yield 1-deoxy-D-xylulose-5-phosphate (DXP). The protein is 1-deoxy-D-xylulose-5-phosphate synthase of Chlorobaculum tepidum (strain ATCC 49652 / DSM 12025 / NBRC 103806 / TLS) (Chlorobium tepidum).